We begin with the raw amino-acid sequence, 348 residues long: Putative methylesterase 14, chloroplastic (348 aa).

2 disordered regions span residues Met1–Ser29 and Gly60–Phe80. The transit peptide at Met1 to Leu76 directs the protein to the chloroplast. Position 77 is a phosphoserine (Ser77). Ser172 (acyl-ester intermediate) is an active-site residue. Catalysis depends on charge relay system residues Asp299 and His327.

This sequence belongs to the AB hydrolase superfamily. Methylesterase family.

It localises to the plastid. Its subcellular location is the chloroplast. Putative methylesterase. The sequence is that of Putative methylesterase 14, chloroplastic from Arabidopsis thaliana (Mouse-ear cress).